Reading from the N-terminus, the 267-residue chain is REH2-associated factor 2 (267 aa).

Component of the REH2-associated complex (REH2C) composed of helicase REH2, associated factors H2F1 and H2F2, and mRNAs at various editing stages; the formation of the complex is RNA-independent. Interacts with various editing complexes including the RNA editing core (RECC) complex, the gRNA-binding (GRBC) complex (also known as the MRB1 complex) and the RNA editing mediator (REMC) complex.

The protein localises to the mitochondrion. In terms of biological role, may play a role in mitochondrial mRNA editing by facilitating the association of the gRNA-binding (GRBC) complex with the RNA editing core (RECC) complex. However, appears to be dispensable for mRNA editing per se. The protein is REH2-associated factor 2 of Trypanosoma brucei brucei (strain 927/4 GUTat10.1).